Here is a 303-residue protein sequence, read N- to C-terminus: Probable 5-dehydro-4-deoxyglucarate dehydratase (303 aa).

The protein belongs to the DapA family.

The enzyme catalyses 5-dehydro-4-deoxy-D-glucarate + H(+) = 2,5-dioxopentanoate + CO2 + H2O. Its pathway is carbohydrate acid metabolism; D-glucarate degradation; 2,5-dioxopentanoate from D-glucarate: step 2/2. This Pseudomonas putida (strain W619) protein is Probable 5-dehydro-4-deoxyglucarate dehydratase.